We begin with the raw amino-acid sequence, 460 residues long: L-seryl-tRNA(Sec) selenium transferase (460 aa).

Lys-293 is modified (N6-(pyridoxal phosphate)lysine).

It belongs to the SelA family. Pyridoxal 5'-phosphate serves as cofactor.

Its subcellular location is the cytoplasm. It catalyses the reaction L-seryl-tRNA(Sec) + selenophosphate + H(+) = L-selenocysteinyl-tRNA(Sec) + phosphate. It functions in the pathway aminoacyl-tRNA biosynthesis; selenocysteinyl-tRNA(Sec) biosynthesis; selenocysteinyl-tRNA(Sec) from L-seryl-tRNA(Sec) (bacterial route): step 1/1. Converts seryl-tRNA(Sec) to selenocysteinyl-tRNA(Sec) required for selenoprotein biosynthesis. This chain is L-seryl-tRNA(Sec) selenium transferase, found in Haemophilus ducreyi (strain 35000HP / ATCC 700724).